Here is a 182-residue protein sequence, read N- to C-terminus: Early upstream open reading frame (182 aa).

The protein belongs to the EUO family.

This is Early upstream open reading frame from Chlamydophila psittaci (strain ATCC VR-125 / 6BC) (Chlamydia psittaci).